Reading from the N-terminus, the 341-residue chain is Cell wall mannoprotein PIR1 (341 aa).

An N-terminal signal peptide occupies residues 1–18 (MQYKKSLVASALVATSLA). A propeptide spanning residues 19–63 (AYAPKDPWSTLTPSATYKGGITDYSSTFGIAVEPIATTASSKAKR) is cleaved from the precursor. PIR1/2/3 repeat units lie at residues 64-82 (AAAI…TKTT), 83-101 (AAAV…TKTK), 102-125 (AAAV…AKTT), 126-144 (AAAV…TKTK), 145-163 (AAAV…TKTT), 164-182 (AAAV…TKTT), 183-201 (AAAV…TNTT), and 202-220 (VAPV…TLTS).

This sequence belongs to the PIR protein family. Post-translationally, covalently linked to beta-1,3-glucan of the inner cell wall layer via an alkali-sensitive ester linkage between the gamma-carboxyl group of glutamic acids, arising from specific glutamines within the PIR1/2/3 repeats, and hydroxyl groups of glucoses of beta-1,3-glucan chains. O-glycosylated. Extensively O-mannosylated.

The protein localises to the secreted. Its subcellular location is the cell wall. Its function is as follows. Component of the outer cell wall layer. Required for stability of the cell wall and for optimal growth. Required for resistance against several antifungal and cell wall-perturbing agents and for tolerance to heat shock. This Saccharomyces cerevisiae (strain ATCC 204508 / S288c) (Baker's yeast) protein is Cell wall mannoprotein PIR1 (PIR1).